A 402-amino-acid polypeptide reads, in one-letter code: Secreted RxLR effector protein 73 (402 aa).

An N-terminal signal peptide occupies residues 1 to 23; it reads MRLLHVVVATVSLTGAITSLIAA. N-linked (GlcNAc...) asparagine glycosylation occurs at asparagine 27. The short motif at 104–107 is the RxLR element; the sequence is RVLR. N-linked (GlcNAc...) asparagine glycosylation is found at asparagine 111, asparagine 134, asparagine 143, asparagine 165, and asparagine 286.

The protein belongs to the RxLR effector family.

The protein localises to the secreted. It is found in the host cell. In terms of biological role, secreted effector that completely suppresses the host cell death induced by cell death-inducing proteins. The sequence is that of Secreted RxLR effector protein 73 from Plasmopara viticola (Downy mildew of grapevine).